Consider the following 148-residue polypeptide: MTFSVIKKVIEIKKDIPFSDEVELSWFDMQKPNLTAVTKKGVNLVVKAKFTHLHENDILVCEDGIGIKVKRSEDEIFSLEFSDALTFAKTAYEIGNRHQPLQIEEFKIIVLDDISIADIIKDCYANESIKVEKTKAYFKPNGKAHHSH.

The protein belongs to the UreE family.

The protein resides in the cytoplasm. Functionally, involved in urease metallocenter assembly. Binds nickel. Probably functions as a nickel donor during metallocenter assembly. This chain is Urease accessory protein UreE, found in Aliarcobacter butzleri (strain RM4018) (Arcobacter butzleri).